Consider the following 484-residue polypeptide: Secreted RxLR effector protein 104 (484 aa).

Residues Met1–Gly24 form the signal peptide. A RxLR-dEER motif is present at residues Arg48 to Arg65. A glycan (N-linked (GlcNAc...) asparagine) is linked at Asn175. Residues Glu324 to Val463 form a disordered region. Positions Lys327–Gly346 are enriched in polar residues. The segment covering Ser402–Pro413 has biased composition (low complexity). The span at Asp418–Leu428 shows a compositional bias: polar residues.

Belongs to the RxLR effector family.

The protein localises to the secreted. Its subcellular location is the host nucleus. Secreted effector that completely suppresses the host cell death induced by cell death-inducing proteins. This Plasmopara viticola (Downy mildew of grapevine) protein is Secreted RxLR effector protein 104.